The primary structure comprises 371 residues: Putative glutamate--cysteine ligase 2 (371 aa).

Belongs to the glutamate--cysteine ligase type 2 family. YbdK subfamily.

The catalysed reaction is L-cysteine + L-glutamate + ATP = gamma-L-glutamyl-L-cysteine + ADP + phosphate + H(+). ATP-dependent carboxylate-amine ligase which exhibits weak glutamate--cysteine ligase activity. The chain is Putative glutamate--cysteine ligase 2 from Burkholderia ambifaria (strain MC40-6).